The following is a 419-amino-acid chain: Metacaspase-1B (419 aa).

Positions 1–109 (MYHPNYNYPP…PPMEAQQFGK (109 aa)) are disordered. The segment covering 33–50 (SPPPPQPYYSNGYPPPSQ) has biased composition (pro residues). The span at 51–66 (SPHSYSPPQYPPHGQY) shows a compositional bias: low complexity. Polar residues predominate over residues 82 to 93 (QYRSYHSHSPSW). Active-site residues include His210 and Cys266.

This sequence belongs to the peptidase C14B family.

Functionally, involved in cell death (apoptosis). This is Metacaspase-1B (casB) from Aspergillus oryzae (strain ATCC 42149 / RIB 40) (Yellow koji mold).